We begin with the raw amino-acid sequence, 364 residues long: Autophagy-related protein 5 (364 aa).

Residues 1–13 show a composition bias toward polar residues; sequence MASPNPYSYSPQL. The tract at residues 1–103 is disordered; that stretch reads MASPNPYSYS…SLPPKPKPSS (103 aa). Low complexity predominate over residues 28 to 42; it reads SSPSFRSTPFRSSRG. Residues 43-53 show a composition bias toward gly residues; sequence TGAGTGIGLGL. Residues 72–82 show a composition bias toward basic and acidic residues; it reads RSGDGSHDDLP. A Glycyl lysine isopeptide (Lys-Gly) (interchain with G-Cter in ATG12) cross-link involves residue Lys-202. Residues 262-306 form a disordered region; it reads PSSPSPPSSDQQQPQRPGGSSSSGSYRVMQTLVPPRGPNNRTPQT. Residues 269–286 are compositionally biased toward low complexity; sequence SSDQQQPQRPGGSSSSGS.

It belongs to the ATG5 family. In terms of assembly, conjugated with atg12. Post-translationally, conjugated to atg12; which is essential for autophagy.

It is found in the preautophagosomal structure membrane. Its function is as follows. Involved in cytoplasm to vacuole transport (Cvt) and autophagic vesicle formation. Autophagy is essential for maintenance of amino acid levels and protein synthesis under nitrogen starvation. Required for selective autophagic degradation of the nucleus (nucleophagy). Also required for mitophagy, which eliminates defective or superfluous mitochondria in order to fulfill cellular energy requirements and prevent excess ROS production. Conjugation with atg12, through a ubiquitin-like conjugating system involving apg-5/atg7 as an E1-like activating enzyme and atg10 as an E2-like conjugating enzyme, is essential for its function. The atg12-apg-4/atg5 conjugate acts as an E3-like enzyme which is required for lipidation of apg-6/atg8 and apg-6/atg8 association to the vesicle membranes. The protein is Autophagy-related protein 5 (apg-4) of Neurospora crassa (strain ATCC 24698 / 74-OR23-1A / CBS 708.71 / DSM 1257 / FGSC 987).